Here is a 141-residue protein sequence, read N- to C-terminus: Large ribosomal subunit protein uL11 (141 aa).

This sequence belongs to the universal ribosomal protein uL11 family. Part of the ribosomal stalk of the 50S ribosomal subunit. Interacts with L10 and the large rRNA to form the base of the stalk. L10 forms an elongated spine to which L12 dimers bind in a sequential fashion forming a multimeric L10(L12)X complex. Post-translationally, one or more lysine residues are methylated.

Its function is as follows. Forms part of the ribosomal stalk which helps the ribosome interact with GTP-bound translation factors. This Trichodesmium erythraeum (strain IMS101) protein is Large ribosomal subunit protein uL11.